Consider the following 216-residue polypeptide: 4-hydroxy-tetrahydrodipicolinate reductase (216 aa).

NAD(+)-binding positions include 9–12 (SGRM), 71–73 (GTT), and 95–98 (AYNF). Catalysis depends on His-127, which acts as the Proton donor/acceptor. His-128 contributes to the (S)-2,3,4,5-tetrahydrodipicolinate binding site. Position 131 (Lys-131) interacts with NAD(+). Lys-131 functions as the Proton donor in the catalytic mechanism. Residue 137–138 (GT) coordinates (S)-2,3,4,5-tetrahydrodipicolinate.

Belongs to the DapB family. As to quaternary structure, homotetramer.

It localises to the cytoplasm. The catalysed reaction is (S)-2,3,4,5-tetrahydrodipicolinate + NAD(+) + H2O = (2S,4S)-4-hydroxy-2,3,4,5-tetrahydrodipicolinate + NADH + H(+). The enzyme catalyses (S)-2,3,4,5-tetrahydrodipicolinate + NADP(+) + H2O = (2S,4S)-4-hydroxy-2,3,4,5-tetrahydrodipicolinate + NADPH + H(+). It functions in the pathway amino-acid biosynthesis; L-lysine biosynthesis via DAP pathway; (S)-tetrahydrodipicolinate from L-aspartate: step 4/4. With respect to regulation, is inhibited by high concentrations of NADH. In terms of biological role, catalyzes the conversion of 4-hydroxy-tetrahydrodipicolinate (HTPA) to tetrahydrodipicolinate. Uses NADPH as a reductant with much more efficiency than NADH. This chain is 4-hydroxy-tetrahydrodipicolinate reductase, found in Thermotoga maritima (strain ATCC 43589 / DSM 3109 / JCM 10099 / NBRC 100826 / MSB8).